Consider the following 254-residue polypeptide: Ribosomal RNA small subunit methyltransferase J (254 aa).

S-adenosyl-L-methionine is bound by residues 107 to 108, 123 to 124, and Asp-174; these read RD and ER.

Belongs to the methyltransferase superfamily. RsmJ family.

It localises to the cytoplasm. It catalyses the reaction guanosine(1516) in 16S rRNA + S-adenosyl-L-methionine = N(2)-methylguanosine(1516) in 16S rRNA + S-adenosyl-L-homocysteine + H(+). Its function is as follows. Specifically methylates the guanosine in position 1516 of 16S rRNA. The sequence is that of Ribosomal RNA small subunit methyltransferase J from Coxiella burnetii (strain Dugway 5J108-111).